A 96-amino-acid polypeptide reads, in one-letter code: Co-chaperonin GroES (96 aa).

This sequence belongs to the GroES chaperonin family. In terms of assembly, heptamer of 7 subunits arranged in a ring. Interacts with the chaperonin GroEL.

The protein localises to the cytoplasm. Its function is as follows. Together with the chaperonin GroEL, plays an essential role in assisting protein folding. The GroEL-GroES system forms a nano-cage that allows encapsulation of the non-native substrate proteins and provides a physical environment optimized to promote and accelerate protein folding. GroES binds to the apical surface of the GroEL ring, thereby capping the opening of the GroEL channel. This chain is Co-chaperonin GroES, found in Delftia acidovorans (strain DSM 14801 / SPH-1).